The chain runs to 296 residues: Polyamine aminopropyltransferase (296 aa).

Positions 5–238 constitute a PABS domain; the sequence is ELWYETLHAN…GIMTFAWATQ (234 aa). Position 33 (Q33) interacts with S-methyl-5'-thioadenosine. Spermidine contacts are provided by H64 and D88. Residues E108 and 140–141 contribute to the S-methyl-5'-thioadenosine site; that span reads DG. Catalysis depends on D158, which acts as the Proton acceptor. Residue 158 to 161 participates in spermidine binding; it reads DCTD. Residue P165 coordinates S-methyl-5'-thioadenosine.

It belongs to the spermidine/spermine synthase family. As to quaternary structure, homodimer or homotetramer.

The protein localises to the cytoplasm. It catalyses the reaction S-adenosyl 3-(methylsulfanyl)propylamine + putrescine = S-methyl-5'-thioadenosine + spermidine + H(+). Its pathway is amine and polyamine biosynthesis; spermidine biosynthesis; spermidine from putrescine: step 1/1. In terms of biological role, catalyzes the irreversible transfer of a propylamine group from the amino donor S-adenosylmethioninamine (decarboxy-AdoMet) to putrescine (1,4-diaminobutane) to yield spermidine. The protein is Polyamine aminopropyltransferase of Yersinia pseudotuberculosis serotype O:3 (strain YPIII).